Here is a 422-residue protein sequence, read N- to C-terminus: Glutamate 2,3-aminomutase (422 aa).

A Radical SAM core domain is found at 150–371 (RRYPDRLIIN…AIPTYIVNAP (222 aa)). Positions 164, 168, and 171 each coordinate [4Fe-4S] cluster. Lysine 376 carries the N6-(pyridoxal phosphate)lysine modification.

Belongs to the radical SAM superfamily. It depends on pyridoxal 5'-phosphate as a cofactor. [4Fe-4S] cluster serves as cofactor.

It catalyses the reaction L-glutamate = 3-aminopentanedioate. Catalyzes the interconversion of L-glutamate and L-beta-glutamate. Does not have L-lysine 2,3-aminomutase activity. The polypeptide is Glutamate 2,3-aminomutase (eam) (Clostridioides difficile (strain 630) (Peptoclostridium difficile)).